The primary structure comprises 182 residues: CDP-diacylglycerol--glycerol-3-phosphate 3-phosphatidyltransferase (182 aa).

Topologically, residues Gln2–Phe12 are cytoplasmic. Residues Arg13 to Leu37 traverse the membrane as a helical segment. Residues Ile38 to Thr60 are Periplasmic-facing. The chain crosses the membrane as a helical span at residues Arg61–Leu81. Topologically, residues Val82–Tyr86 are cytoplasmic. Residues His87 to Ala107 traverse the membrane as a helical segment. At Leu108 to Pro145 the chain is on the periplasmic side. The chain crosses the membrane as a helical span at residues Asn146 to Met168. The Cytoplasmic portion of the chain corresponds to Leu169–Asp181.

Belongs to the CDP-alcohol phosphatidyltransferase class-I family.

It localises to the cell inner membrane. It carries out the reaction a CDP-1,2-diacyl-sn-glycerol + sn-glycerol 3-phosphate = a 1,2-diacyl-sn-glycero-3-phospho-(1'-sn-glycero-3'-phosphate) + CMP + H(+). Its pathway is phospholipid metabolism; phosphatidylglycerol biosynthesis; phosphatidylglycerol from CDP-diacylglycerol: step 1/2. In terms of biological role, catalyzes the conversion of cytidine diphosphate diacylglycerol (CDP-DG) and glycerol 3-phosphate into phosphatidylglycerol. Essential for the synthesis of anionic phospholipids, thereby playing a role in balancing the ratio of zwitterionic and anionic phospholipids, which is thought to be important for normal membrane function. The chain is CDP-diacylglycerol--glycerol-3-phosphate 3-phosphatidyltransferase from Salmonella paratyphi A (strain ATCC 9150 / SARB42).